Reading from the N-terminus, the 370-residue chain is UDP-N-acetylglucosamine--N-acetylmuramyl-(pentapeptide) pyrophosphoryl-undecaprenol N-acetylglucosamine transferase (370 aa).

UDP-N-acetyl-alpha-D-glucosamine-binding positions include 14–16 (TGG), Asn125, Arg168, Ser196, and Gln297.

The protein belongs to the glycosyltransferase 28 family. MurG subfamily.

The protein resides in the cell inner membrane. It carries out the reaction di-trans,octa-cis-undecaprenyl diphospho-N-acetyl-alpha-D-muramoyl-L-alanyl-D-glutamyl-meso-2,6-diaminopimeloyl-D-alanyl-D-alanine + UDP-N-acetyl-alpha-D-glucosamine = di-trans,octa-cis-undecaprenyl diphospho-[N-acetyl-alpha-D-glucosaminyl-(1-&gt;4)]-N-acetyl-alpha-D-muramoyl-L-alanyl-D-glutamyl-meso-2,6-diaminopimeloyl-D-alanyl-D-alanine + UDP + H(+). The protein operates within cell wall biogenesis; peptidoglycan biosynthesis. Its function is as follows. Cell wall formation. Catalyzes the transfer of a GlcNAc subunit on undecaprenyl-pyrophosphoryl-MurNAc-pentapeptide (lipid intermediate I) to form undecaprenyl-pyrophosphoryl-MurNAc-(pentapeptide)GlcNAc (lipid intermediate II). This Nitrobacter hamburgensis (strain DSM 10229 / NCIMB 13809 / X14) protein is UDP-N-acetylglucosamine--N-acetylmuramyl-(pentapeptide) pyrophosphoryl-undecaprenol N-acetylglucosamine transferase.